We begin with the raw amino-acid sequence, 335 residues long: GTPase Obg (335 aa).

The 159-residue stretch at methionine 1–leucine 159 folds into the Obg domain. One can recognise an OBG-type G domain in the interval alanine 160–glutamate 328. Residues glycine 166–serine 173, phenylalanine 191–valine 195, aspartate 213–glycine 216, asparagine 280–aspartate 283, and serine 309–alanine 311 each bind GTP. Residues serine 173 and threonine 193 each coordinate Mg(2+).

Belongs to the TRAFAC class OBG-HflX-like GTPase superfamily. OBG GTPase family. As to quaternary structure, monomer. Requires Mg(2+) as cofactor.

It is found in the cytoplasm. Functionally, an essential GTPase which binds GTP, GDP and possibly (p)ppGpp with moderate affinity, with high nucleotide exchange rates and a fairly low GTP hydrolysis rate. Plays a role in control of the cell cycle, stress response, ribosome biogenesis and in those bacteria that undergo differentiation, in morphogenesis control. The sequence is that of GTPase Obg from Gloeobacter violaceus (strain ATCC 29082 / PCC 7421).